Here is a 271-residue protein sequence, read N- to C-terminus: Oligodendrocyte transcription factor 1 (271 aa).

Residues 38–117 are disordered; that stretch reads YRQPPSSSSS…RKINSRERKR (80 aa). Residues 43–61 are compositionally biased toward low complexity; the sequence is SSSSSSTSSTSSTSSSSTT. The region spanning 105 to 164 is the bHLH domain; that stretch reads QLRRKINSRERKRMQDLNLAMDALREVILPYSAAHCQGAPGRKLSKIATLLLARNYILLL.

Expressed in the brain, in oligodendrocytes. Strongly expressed in oligodendrogliomas, while expression is weak to moderate in astrocytomas. Expression in glioblastomas is highly variable.

The protein resides in the nucleus. Promotes formation and maturation of oligodendrocytes, especially within the brain. Cooperates with OLIG2 to establish the pMN domain of the embryonic neural tube. This chain is Oligodendrocyte transcription factor 1 (OLIG1), found in Homo sapiens (Human).